Consider the following 273-residue polypeptide: Flagellin FljO (273 aa).

This sequence belongs to the bacterial flagellin family. In C.crescentus, the flagellar filament is composed of multiple flagellins of 29 kDa; 27 kDa and 25 kDa.

It localises to the secreted. The protein resides in the bacterial flagellum. Its function is as follows. Flagellin is the subunit protein which polymerizes to form the filaments of bacterial flagella. The protein is Flagellin FljO (fljO) of Caulobacter vibrioides (strain ATCC 19089 / CIP 103742 / CB 15) (Caulobacter crescentus).